The sequence spans 342 residues: Spore photoproduct lyase (342 aa).

Residues 77-305 (SKPSAEYAIP…EEKRRYKWGR (229 aa)) enclose the Radical SAM core domain. The [4Fe-4S] cluster site is built by cysteine 91, cysteine 95, and cysteine 98. Positions 218–235 (EAAVKVAKAGYPLGFIVA) form a DNA-binding region, H-T-H motif.

This sequence belongs to the radical SAM superfamily. SPL family. As to quaternary structure, monomer or homodimer. [4Fe-4S] cluster serves as cofactor. It depends on S-adenosyl-L-methionine as a cofactor.

The catalysed reaction is (5R)-5,6-dihydro-5-(thymidin-7-yl)thymidine in DNA = a thymidine dimer in DNA. Involved in repair of UV radiation-induced DNA damage during spore germination. Can repair thymine dimer 5-thyminyl-5,6-dihydrothymine (known as spore photoproduct (SP)) by in situ monomerization of SP to two thymines. The sequence is that of Spore photoproduct lyase (splB) from Bacillus subtilis (strain 168).